Consider the following 80-residue polypeptide: RNA-binding protein Hfq (80 aa).

The Sm domain occupies 10-70 (DIFLNNARKE…ISTVSPAKPI (61 aa)).

Belongs to the Hfq family. As to quaternary structure, homohexamer.

Its function is as follows. RNA chaperone that binds small regulatory RNA (sRNAs) and mRNAs to facilitate mRNA translational regulation in response to envelope stress, environmental stress and changes in metabolite concentrations. Also binds with high specificity to tRNAs. The sequence is that of RNA-binding protein Hfq from Clostridium perfringens (strain SM101 / Type A).